The primary structure comprises 146 residues: Leptin (146 aa).

A disulfide bond links Cys-96 and Cys-146.

It belongs to the leptin family.

The protein resides in the secreted. In terms of biological role, key player in the regulation of energy balance and body weight control. Once released into the circulation, has central and peripheral effects by binding LEPR, found in many tissues, which results in the activation of several major signaling pathways. In the hypothalamus, acts as an appetite-regulating factor that induces a decrease in food intake and an increase in energy consumption by inducing anorexinogenic factors and suppressing orexigenic neuropeptides, also regulates bone mass and secretion of hypothalamo-pituitary-adrenal hormones. In the periphery, increases basal metabolism, influences reproductive function, regulates pancreatic beta-cell function and insulin secretion, is pro-angiogenic for endothelial cell and affects innate and adaptive immunity. In the arcuate nucleus of the hypothalamus, activates by depolarization POMC neurons inducing FOS and SOCS3 expression to release anorexigenic peptides and inhibits by hyperpolarization NPY neurons inducing SOCS3 with a consequent reduction on release of orexigenic peptides. In addition to its known satiety inducing effect, has a modulatory role in nutrient absorption. In the intestine, reduces glucose absorption by enterocytes by activating PKC and leading to a sequential activation of p38, PI3K and ERK signaling pathways which exerts an inhibitory effect on glucose absorption. Acts as a growth factor on certain tissues, through the activation of different signaling pathways increases expression of genes involved in cell cycle regulation such as CCND1, via JAK2-STAT3 pathway, or VEGFA, via MAPK1/3 and PI3K-AKT1 pathways. May also play an apoptotic role via JAK2-STAT3 pathway and up-regulation of BIRC5 expression. Pro-angiogenic, has mitogenic activity on vascular endothelial cells and plays a role in matrix remodeling by regulating the expression of matrix metalloproteinases (MMPs) and tissue inhibitors of metalloproteinases (TIMPs). In innate immunity, modulates the activity and function of neutrophils by increasing chemotaxis and the secretion of oxygen radicals. Increases phagocytosis by macrophages and enhances secretion of pro-inflammatory mediators. Increases cytotoxic ability of NK cells. Plays a pro-inflammatory role, in synergy with IL1B, by inducing NOS2 which promotes the production of IL6, IL8 and Prostaglandin E2, through a signaling pathway that involves JAK2, PI3K, MAP2K1/MEK1 and MAPK14/p38. In adaptive immunity, promotes the switch of memory T-cells towards T helper-1 cell immune responses. Increases CD4(+)CD25(-) T-cell proliferation and reduces autophagy during TCR (T-cell receptor) stimulation, through MTOR signaling pathway activation and BCL2 up-regulation. The protein is Leptin (LEP) of Gorilla gorilla gorilla (Western lowland gorilla).